Consider the following 622-residue polypeptide: Sodium-coupled monocarboxylate transporter 1 (622 aa).

Over 1–15 the chain is Extracellular; sequence MVTPGNIGSFTVWDY. A helical membrane pass occupies residues 16–36; it reads LVFALMLLISAVIGIYYAFAG. Residues 37-51 lie on the Cytoplasmic side of the membrane; the sequence is GGQKTSKDFLMGGRS. Residues 52-72 form a helical membrane-spanning segment; the sequence is MTAVPVALSLTASFMSAVTVL. Residues 73-83 are Extracellular-facing; that stretch reads GTPAEVYRFGA. The helical transmembrane segment at 84 to 104 threads the bilayer; that stretch reads MFIIFAFSYTIVVIISSEVFL. Residues 105–128 are Cytoplasmic-facing; sequence PVFYRLGITSTYEYLELRFNKFVR. Residues 129–149 traverse the membrane as a helical segment; it reads LLGTILFIIQTVLYTGIVIYA. The Extracellular portion of the chain corresponds to 150–161; it reads PALALNQVTGFD. The helical transmembrane segment at 162-182 threads the bilayer; that stretch reads LWGAVVATGVVCTFYCTMGGL. Residues 183–184 lie on the Cytoplasmic side of the membrane; it reads KA. Residues 185–205 form a helical membrane-spanning segment; it reads VVWTDVFQVGIMVAGFTSVII. Over 206 to 241 the chain is Extracellular; sequence RAVVVQGGIGPILNDSYYGDRLNFWDFDPNPLKRHT. Asn219 is a glycosylation site (N-linked (GlcNAc...) asparagine). A helical transmembrane segment spans residues 242–262; it reads FWTIVVGGTFTWTGIYGVNQA. Residues 263–283 lie on the Cytoplasmic side of the membrane; that stretch reads QVQRYIACKTRFQAKMSLYVN. The chain crosses the membrane as a helical span at residues 284–304; the sequence is LIGLWAILACAVLSGLAMYSI. Residues 305 to 336 lie on the Extracellular side of the membrane; sequence YKDCDPWTAKFVSAPDQLMPYLALDILRDYPG. A helical transmembrane segment spans residues 337–357; that stretch reads LPGLFVSCAYSGTLSTVSSSI. The Cytoplasmic portion of the chain corresponds to 358-389; sequence NALAAVTVEDLIKPYIRSLSEKKMSWISKGTS. The helical transmembrane segment at 390-410 threads the bilayer; sequence LLYGAICIGMAGIASLMGGLL. At 411–415 the chain is on the extracellular side; that stretch reads QAALS. A helical membrane pass occupies residues 416–436; it reads IFGMVGGPLLGLFSLGILFPF. The Cytoplasmic portion of the chain corresponds to 437–438; it reads VN. Residues 439–459 form a helical membrane-spanning segment; sequence SLGAVIGLLSGFAISLWVGIG. The Extracellular segment spans residues 460–521; that stretch reads SQIYAPSPSS…LADSWYSLSY (62 aa). Residues Asn481 and Asn488 are each glycosylated (N-linked (GlcNAc...) asparagine). A helical transmembrane segment spans residues 522-542; that stretch reads LYFSTIGTIVAVLVGVIVSLL. Residues 543–622 lie on the Cytoplasmic side of the membrane; it reads SGGLKQNVNR…KGEKTNGITA (80 aa). The interval 591 to 622 is disordered; sequence DNDMEQGTDNPAFNNMEMTSTEKGEKTNGITA. Residues 595 to 609 show a composition bias toward polar residues; the sequence is EQGTDNPAFNNMEMT.

This sequence belongs to the sodium:solute symporter (SSF) (TC 2.A.21) family. In terms of tissue distribution, in the gastrula and neurula stages, expressed in the gastrula anterior endoderm and in the entire circumference of the blastopore lip superficial endoderm. At tailbud stages, abundant expression observed in the ventral midgut region. As development proceeds expression becomes restricted to the liver diverticulum and ultimately to the presumptive gallbladder, by tadpole stage 35. Also present in pronephros and the tip of the tail.

Its subcellular location is the apical cell membrane. It carries out the reaction (S)-lactate(out) + 2 Na(+)(out) = (S)-lactate(in) + 2 Na(+)(in). The catalysed reaction is propanoate(out) + 2 Na(+)(out) = propanoate(in) + 2 Na(+)(in). It catalyses the reaction pyruvate(out) + 2 Na(+)(out) = pyruvate(in) + 2 Na(+)(in). The enzyme catalyses acetate(out) + 2 Na(+)(out) = acetate(in) + 2 Na(+)(in). It carries out the reaction butanoate(out) + 2 Na(+)(out) = butanoate(in) + 2 Na(+)(in). The catalysed reaction is nicotinate(out) + 2 Na(+)(out) = nicotinate(in) + 2 Na(+)(in). It catalyses the reaction (R)-3-hydroxybutanoate(out) + 2 Na(+)(out) = (R)-3-hydroxybutanoate(in) + 2 Na(+)(in). The enzyme catalyses acetoacetate(out) + 2 Na(+)(out) = acetoacetate(in) + 2 Na(+)(in). It carries out the reaction 4-methyl-2-oxopentanoate(out) + 2 Na(+)(out) = 4-methyl-2-oxopentanoate(in) + 2 Na(+)(in). The catalysed reaction is 5-oxo-L-proline(out) + 2 Na(+)(out) = 5-oxo-L-proline(in) + 2 Na(+)(in). It catalyses the reaction iodide(out) = iodide(in). The enzyme catalyses chloride(in) = chloride(out). It carries out the reaction nitrate(in) = nitrate(out). The catalysed reaction is bromide(in) = bromide(out). Its function is as follows. Acts as an electrogenic sodium (Na(+)) and chloride (Cl-)-dependent sodium-coupled solute transporter, including transport of monocarboxylates (short-chain fatty acids including L-lactate, D-lactate, pyruvate, acetate, propionate, valerate and butyrate), mocarboxylate drugs (nicotinate, benzoate, salicylate and 5-aminosalicylate) and ketone bodies (beta-D-hydroxybutyrate, acetoacetate and alpha-ketoisocaproate), with a Na(+):substrate stoichiometry of between 4:1 and 2:1. Catalyzes passive carrier mediated diffusion of iodide. Mediates iodide transport from the thyrocyte into the colloid lumen through the apical membrane. Mediates sodium-coupled electrogenic transport of pyroglutamate (5-oxo-L-proline). Can mediate the transport of chloride, bromide, iodide and nitrate ions when external concentration of sodium ions is reduced. In Xenopus laevis (African clawed frog), this protein is Sodium-coupled monocarboxylate transporter 1.